The following is a 309-amino-acid chain: UPF0282 protein Saci_0277 (309 aa).

Belongs to the UPF0282 family.

The chain is UPF0282 protein Saci_0277 from Sulfolobus acidocaldarius (strain ATCC 33909 / DSM 639 / JCM 8929 / NBRC 15157 / NCIMB 11770).